The sequence spans 181 residues: ATP synthase subunit delta (181 aa).

Belongs to the ATPase delta chain family. F-type ATPases have 2 components, F(1) - the catalytic core - and F(0) - the membrane proton channel. F(1) has five subunits: alpha(3), beta(3), gamma(1), delta(1), epsilon(1). F(0) has three main subunits: a(1), b(2) and c(10-14). The alpha and beta chains form an alternating ring which encloses part of the gamma chain. F(1) is attached to F(0) by a central stalk formed by the gamma and epsilon chains, while a peripheral stalk is formed by the delta and b chains.

The protein localises to the cell membrane. In terms of biological role, f(1)F(0) ATP synthase produces ATP from ADP in the presence of a proton or sodium gradient. F-type ATPases consist of two structural domains, F(1) containing the extramembraneous catalytic core and F(0) containing the membrane proton channel, linked together by a central stalk and a peripheral stalk. During catalysis, ATP synthesis in the catalytic domain of F(1) is coupled via a rotary mechanism of the central stalk subunits to proton translocation. Its function is as follows. This protein is part of the stalk that links CF(0) to CF(1). It either transmits conformational changes from CF(0) to CF(1) or is implicated in proton conduction. The protein is ATP synthase subunit delta of Mycoplasma mycoides subsp. mycoides SC (strain CCUG 32753 / NCTC 10114 / PG1).